Reading from the N-terminus, the 317-residue chain is Acetyl-coenzyme A carboxylase carboxyl transferase subunit alpha (317 aa).

In terms of domain architecture, CoA carboxyltransferase C-terminal spans Asn32–Ala293.

This sequence belongs to the AccA family. In terms of assembly, acetyl-CoA carboxylase is a heterohexamer composed of biotin carboxyl carrier protein (AccB), biotin carboxylase (AccC) and two subunits each of ACCase subunit alpha (AccA) and ACCase subunit beta (AccD).

It localises to the cytoplasm. It carries out the reaction N(6)-carboxybiotinyl-L-lysyl-[protein] + acetyl-CoA = N(6)-biotinyl-L-lysyl-[protein] + malonyl-CoA. Its pathway is lipid metabolism; malonyl-CoA biosynthesis; malonyl-CoA from acetyl-CoA: step 1/1. Functionally, component of the acetyl coenzyme A carboxylase (ACC) complex. First, biotin carboxylase catalyzes the carboxylation of biotin on its carrier protein (BCCP) and then the CO(2) group is transferred by the carboxyltransferase to acetyl-CoA to form malonyl-CoA. This Legionella pneumophila (strain Paris) protein is Acetyl-coenzyme A carboxylase carboxyl transferase subunit alpha.